The chain runs to 284 residues: Tryptophan 2,3-dioxygenase (284 aa).

Residues 53–57 and Arg-119 each bind substrate; that span reads FIIQH. Position 242 (His-242) interacts with heme. Thr-256 contacts substrate.

This sequence belongs to the tryptophan 2,3-dioxygenase family. In terms of assembly, homotetramer. Requires heme as cofactor.

The enzyme catalyses L-tryptophan + O2 = N-formyl-L-kynurenine. The protein operates within amino-acid degradation; L-tryptophan degradation via kynurenine pathway; L-kynurenine from L-tryptophan: step 1/2. It functions in the pathway siderophore biosynthesis; quinolobactin biosynthesis. In terms of biological role, heme-dependent dioxygenase that catalyzes the oxidative cleavage of the L-tryptophan (L-Trp) pyrrole ring and converts L-tryptophan to N-formyl-L-kynurenine. Catalyzes the oxidative cleavage of the indole moiety. Required for synthesis of the siderophore quinolobactin. This is Tryptophan 2,3-dioxygenase from Pseudomonas fluorescens.